We begin with the raw amino-acid sequence, 423 residues long: Histidine--tRNA ligase (423 aa).

It belongs to the class-II aminoacyl-tRNA synthetase family. As to quaternary structure, homodimer.

Its subcellular location is the cytoplasm. It catalyses the reaction tRNA(His) + L-histidine + ATP = L-histidyl-tRNA(His) + AMP + diphosphate + H(+). This Corynebacterium diphtheriae (strain ATCC 700971 / NCTC 13129 / Biotype gravis) protein is Histidine--tRNA ligase.